The chain runs to 644 residues: Ribonuclease R (644 aa).

Residues 211–529 (RINYSHIPFI…LHRLLKELLF (319 aa)) form the RNB domain. The region spanning 573 to 644 (LEFLEKEFLG…ITERIKEHVS (72 aa)) is the S1 motif domain.

This sequence belongs to the RNR ribonuclease family. RNase R subfamily.

It localises to the cytoplasm. It carries out the reaction Exonucleolytic cleavage in the 3'- to 5'-direction to yield nucleoside 5'-phosphates.. Its function is as follows. 3'-5' exoribonuclease that releases 5'-nucleoside monophosphates and is involved in maturation of structured RNAs. The sequence is that of Ribonuclease R from Helicobacter pylori (strain J99 / ATCC 700824) (Campylobacter pylori J99).